The chain runs to 180 residues: Stathmin-3 (180 aa).

2 S-palmitoyl cysteine lipidation sites follow: cysteine 22 and cysteine 24. An SLD domain is found at 38-180; that stretch reads GDMEVKQLDK…NKEQREEMSG (143 aa). Phosphoserine is present on residues serine 50, serine 60, serine 65, serine 68, serine 72, serine 73, and serine 81. Residues 59–82 are disordered; the sequence is KSPSDLSPESPMLSSPPKKKDTSL. Positions 60-74 are enriched in low complexity; it reads SPSDLSPESPMLSSP. Residues 76–179 are a coiled coil; that stretch reads KKKDTSLEEL…RNKEQREEMS (104 aa).

This sequence belongs to the stathmin family. Interacts with STAT3. Interacts with CLU (secreted form); this interaction may act as an important modulator during neuronal differentiation. Post-translationally, N-terminal palmitoylation promotes specific anchoring to the cytosolic leaflet of Golgi membranes and subsequent vesicular trafficking along dendrites and axons. Neuronal Stathmins are substrates for palmitoyltransferases ZDHHC3, ZDHHC7 and ZDHHC15.

The protein resides in the golgi apparatus. The protein localises to the cell projection. It localises to the growth cone. Its subcellular location is the axon. It is found in the cytoplasm. The protein resides in the cytosol. Functionally, exhibits microtubule-destabilizing activity, which is antagonized by STAT3. The sequence is that of Stathmin-3 (STMN3) from Macaca fascicularis (Crab-eating macaque).